The following is a 95-amino-acid chain: UPF0235 protein MS0322 (95 aa).

It belongs to the UPF0235 family.

The polypeptide is UPF0235 protein MS0322 (Mannheimia succiniciproducens (strain KCTC 0769BP / MBEL55E)).